The following is a 208-amino-acid chain: Ribosomal RNA large subunit methyltransferase E (208 aa).

5 residues coordinate S-adenosyl-L-methionine: Gly62, Trp64, Asp82, Asp98, and Asp123. The active-site Proton acceptor is the Lys163.

This sequence belongs to the class I-like SAM-binding methyltransferase superfamily. RNA methyltransferase RlmE family.

It is found in the cytoplasm. It carries out the reaction uridine(2552) in 23S rRNA + S-adenosyl-L-methionine = 2'-O-methyluridine(2552) in 23S rRNA + S-adenosyl-L-homocysteine + H(+). In terms of biological role, specifically methylates the uridine in position 2552 of 23S rRNA at the 2'-O position of the ribose in the fully assembled 50S ribosomal subunit. This Mannheimia succiniciproducens (strain KCTC 0769BP / MBEL55E) protein is Ribosomal RNA large subunit methyltransferase E.